Consider the following 416-residue polypeptide: Venom allergen 5 (416 aa).

The first 24 residues, 1 to 24 (MKGILLLFLKLVVLFVYLCSSVLS), serve as a signal peptide directing secretion. The SCP domain occupies 57–217 (DDRNTIINLH…NYGPAGNLDD (161 aa)). Arginine 82 bears the Arginine amide; in Cryptide Pep-4 mark.

This sequence belongs to the CRISP family. Venom allergen 5-like subfamily. Contains 9 disulfide bonds. Expressed by the venom gland.

It is found in the secreted. Presents weak lactate dehydrogenase (LDH) release from mast cells. Does not induce hemolytic activity, mast cell degranulation, and antimicrobial effects. In vivo, injection into mice causes moderate edema formation, but induces very weak or no change in nociceptive sensibility. It also causes an alteration in rearing (standing on hind limbs), but does not impact locomotion. The chain is Venom allergen 5 from Tityus serrulatus (Brazilian scorpion).